The sequence spans 900 residues: Alanine--tRNA ligase (900 aa).

Zn(2+) is bound by residues H604, H608, C708, and H712.

The protein belongs to the class-II aminoacyl-tRNA synthetase family. Requires Zn(2+) as cofactor.

The protein localises to the cytoplasm. It carries out the reaction tRNA(Ala) + L-alanine + ATP = L-alanyl-tRNA(Ala) + AMP + diphosphate. Functionally, catalyzes the attachment of alanine to tRNA(Ala) in a two-step reaction: alanine is first activated by ATP to form Ala-AMP and then transferred to the acceptor end of tRNA(Ala). Also edits incorrectly charged Ser-tRNA(Ala) and Gly-tRNA(Ala) via its editing domain. This Saccharolobus islandicus (strain Y.G.57.14 / Yellowstone #1) (Sulfolobus islandicus) protein is Alanine--tRNA ligase.